The chain runs to 418 residues: Tyrosine--tRNA ligase (418 aa).

Residue Tyr-34 coordinates L-tyrosine. The 'HIGH' region motif lies at 39 to 48 (PTADSLHLGH). Tyr-169 and Gln-173 together coordinate L-tyrosine. The 'KMSKS' region signature appears at 229 to 233 (KFGKS). Lys-232 lines the ATP pocket. Residues 352 to 418 (LNLVDMLVTA…GKKKYAVLTY (67 aa)) form the S4 RNA-binding domain.

It belongs to the class-I aminoacyl-tRNA synthetase family. TyrS type 1 subfamily. Homodimer.

It localises to the cytoplasm. The catalysed reaction is tRNA(Tyr) + L-tyrosine + ATP = L-tyrosyl-tRNA(Tyr) + AMP + diphosphate + H(+). Catalyzes the attachment of tyrosine to tRNA(Tyr) in a two-step reaction: tyrosine is first activated by ATP to form Tyr-AMP and then transferred to the acceptor end of tRNA(Tyr). This Streptococcus pyogenes serotype M18 (strain MGAS8232) protein is Tyrosine--tRNA ligase.